The sequence spans 230 residues: Uracil-DNA glycosylase (230 aa).

Catalysis depends on D70, which acts as the Proton acceptor.

This sequence belongs to the uracil-DNA glycosylase (UDG) superfamily. UNG family.

The protein localises to the cytoplasm. The enzyme catalyses Hydrolyzes single-stranded DNA or mismatched double-stranded DNA and polynucleotides, releasing free uracil.. Excises uracil residues from the DNA which can arise as a result of misincorporation of dUMP residues by DNA polymerase or due to deamination of cytosine. The protein is Uracil-DNA glycosylase of Pseudomonas syringae pv. syringae (strain B728a).